We begin with the raw amino-acid sequence, 475 residues long: Aspartyl/glutamyl-tRNA(Asn/Gln) amidotransferase subunit B (475 aa).

This sequence belongs to the GatB/GatE family. GatB subfamily. As to quaternary structure, heterotrimer of A, B and C subunits.

The catalysed reaction is L-glutamyl-tRNA(Gln) + L-glutamine + ATP + H2O = L-glutaminyl-tRNA(Gln) + L-glutamate + ADP + phosphate + H(+). It carries out the reaction L-aspartyl-tRNA(Asn) + L-glutamine + ATP + H2O = L-asparaginyl-tRNA(Asn) + L-glutamate + ADP + phosphate + 2 H(+). Allows the formation of correctly charged Asn-tRNA(Asn) or Gln-tRNA(Gln) through the transamidation of misacylated Asp-tRNA(Asn) or Glu-tRNA(Gln) in organisms which lack either or both of asparaginyl-tRNA or glutaminyl-tRNA synthetases. The reaction takes place in the presence of glutamine and ATP through an activated phospho-Asp-tRNA(Asn) or phospho-Glu-tRNA(Gln). This is Aspartyl/glutamyl-tRNA(Asn/Gln) amidotransferase subunit B from Staphylococcus aureus (strain COL).